Reading from the N-terminus, the 184-residue chain is Glutathione-regulated potassium-efflux system ancillary protein KefG (184 aa).

The protein belongs to the NAD(P)H dehydrogenase (quinone) family. KefG subfamily. Interacts with KefB.

It localises to the cell inner membrane. It carries out the reaction a quinone + NADH + H(+) = a quinol + NAD(+). It catalyses the reaction a quinone + NADPH + H(+) = a quinol + NADP(+). Regulatory subunit of a potassium efflux system that confers protection against electrophiles. Required for full activity of KefB. The sequence is that of Glutathione-regulated potassium-efflux system ancillary protein KefG from Escherichia coli O8 (strain IAI1).